A 306-amino-acid chain; its full sequence is Porphobilinogen deaminase (306 aa).

C237 is modified (S-(dipyrrolylmethanemethyl)cysteine).

This sequence belongs to the HMBS family. In terms of assembly, monomer. Dipyrromethane is required as a cofactor.

The catalysed reaction is 4 porphobilinogen + H2O = hydroxymethylbilane + 4 NH4(+). It functions in the pathway porphyrin-containing compound metabolism; protoporphyrin-IX biosynthesis; coproporphyrinogen-III from 5-aminolevulinate: step 2/4. Functionally, tetrapolymerization of the monopyrrole PBG into the hydroxymethylbilane pre-uroporphyrinogen in several discrete steps. The protein is Porphobilinogen deaminase of Syntrophus aciditrophicus (strain SB).